We begin with the raw amino-acid sequence, 392 residues long: Probable inactive serine/threonine-protein kinase DDB_G0280855 (392 aa).

Residues 46–349 (ITKKTIYACD…IERIIQHPYF (304 aa)) form the Protein kinase domain. Residues 52 to 60 (YACDINGTM) and K75 each bind ATP.

The protein belongs to the protein kinase superfamily. CMGC Ser/Thr protein kinase family. MAP kinase subfamily.

In Dictyostelium discoideum (Social amoeba), this protein is Probable inactive serine/threonine-protein kinase DDB_G0280855.